We begin with the raw amino-acid sequence, 148 residues long: Large ribosomal subunit protein bL9 (148 aa).

It belongs to the bacterial ribosomal protein bL9 family.

In terms of biological role, binds to the 23S rRNA. In Bifidobacterium adolescentis (strain ATCC 15703 / DSM 20083 / NCTC 11814 / E194a), this protein is Large ribosomal subunit protein bL9.